The sequence spans 159 residues: ATP synthase subunit b 2 (159 aa).

Residues 1 to 21 (MDATFWALIGLIIFLAILAYL) traverse the membrane as a helical segment.

It belongs to the ATPase B chain family. In terms of assembly, F-type ATPases have 2 components, F(1) - the catalytic core - and F(0) - the membrane proton channel. F(1) has five subunits: alpha(3), beta(3), gamma(1), delta(1), epsilon(1). F(0) has three main subunits: a(1), b(2) and c(10-14). The alpha and beta chains form an alternating ring which encloses part of the gamma chain. F(1) is attached to F(0) by a central stalk formed by the gamma and epsilon chains, while a peripheral stalk is formed by the delta and b chains.

The protein localises to the cell inner membrane. In terms of biological role, f(1)F(0) ATP synthase produces ATP from ADP in the presence of a proton or sodium gradient. F-type ATPases consist of two structural domains, F(1) containing the extramembraneous catalytic core and F(0) containing the membrane proton channel, linked together by a central stalk and a peripheral stalk. During catalysis, ATP synthesis in the catalytic domain of F(1) is coupled via a rotary mechanism of the central stalk subunits to proton translocation. Functionally, component of the F(0) channel, it forms part of the peripheral stalk, linking F(1) to F(0). This chain is ATP synthase subunit b 2, found in Brucella anthropi (strain ATCC 49188 / DSM 6882 / CCUG 24695 / JCM 21032 / LMG 3331 / NBRC 15819 / NCTC 12168 / Alc 37) (Ochrobactrum anthropi).